Reading from the N-terminus, the 407-residue chain is Eukaryotic initiation factor 4A-II (407 aa).

The segment at 1 to 23 is disordered; the sequence is MSGGSADYSRDHGGPEGMEPDGV. Positions 33-61 match the Q motif motif; that stretch reads DNFDDMNLKESLLRGIYAYGFEKPSAIQQ. In terms of domain architecture, Helicase ATP-binding spans 64–235; that stretch reads IIPCIKGYDV…KKFMREPIRI (172 aa). 77-84 contributes to the ATP binding site; it reads AQSGTGKT. The DEAD box signature appears at 183–186; that stretch reads DEAD. In terms of domain architecture, Helicase C-terminal spans 246–407; the sequence is GIKQFYINVE…EMPMNVADLI (162 aa).

This sequence belongs to the DEAD box helicase family. eIF4A subfamily. EIF4F is a multi-subunit complex, the composition of which varies with external and internal environmental conditions. It is composed of at least EIF4A, EIF4E and EIF4G1/EIFFG3. Interacts with EIF4E.

The enzyme catalyses ATP + H2O = ADP + phosphate + H(+). In terms of biological role, ATP-dependent RNA helicase which is a subunit of the eIF4F complex involved in cap recognition and is required for mRNA binding to ribosome. In the current model of translation initiation, eIF4A unwinds RNA secondary structures in the 5'-UTR of mRNAs which is necessary to allow efficient binding of the small ribosomal subunit, and subsequent scanning for the initiator codon. This is Eukaryotic initiation factor 4A-II (EIF4A2) from Gallus gallus (Chicken).